The chain runs to 147 residues: Hemoglobin subunit beta (147 aa).

Positions 3-147 constitute a Globin domain; that stretch reads EWTDDERAII…VVSALGRQYH (145 aa). Heme b contacts are provided by H64 and H93.

The protein belongs to the globin family. As to quaternary structure, heterotetramer of two alpha chains and two beta chains. As to expression, red blood cells.

Involved in oxygen transport from gills to the various peripheral tissues. This is Hemoglobin subunit beta (hbb) from Melanogrammus aeglefinus (Haddock).